A 359-amino-acid chain; its full sequence is Serum paraoxonase/arylesterase 1 (359 aa).

Cysteine 42 and cysteine 353 are joined by a disulfide. Residue asparagine 50 is glycosylated (N-linked (GlcNAc...) asparagine). Residues glutamate 53 and aspartate 54 each coordinate Ca(2+). Histidine 115 functions as the Proton acceptor in the catalytic mechanism. Positions 117, 168, 169, and 224 each coordinate Ca(2+). Asparagine 253 carries an N-linked (GlcNAc...) asparagine glycan. Aspartate 269 and asparagine 270 together coordinate Ca(2+). Asparagine 270 and asparagine 324 each carry an N-linked (GlcNAc...) asparagine glycan.

It belongs to the paraoxonase family. As to quaternary structure, homodimer. Interacts with CLU. Ca(2+) serves as cofactor. In terms of processing, glycosylated. Post-translationally, the signal sequence is not cleaved. As to expression, plasma. Associated with HDL.

Its subcellular location is the secreted. The protein localises to the extracellular space. It carries out the reaction a phenyl acetate + H2O = a phenol + acetate + H(+). The catalysed reaction is An aryl dialkyl phosphate + H2O = dialkyl phosphate + an aryl alcohol.. It catalyses the reaction an N-acyl-L-homoserine lactone + H2O = an N-acyl-L-homoserine + H(+). Hydrolyzes the toxic metabolites of a variety of organophosphorus insecticides. Capable of hydrolyzing a broad spectrum of organophosphate substrates and lactones, and a number of aromatic carboxylic acid esters. Mediates an enzymatic protection of low density lipoproteins against oxidative modification. In Oryctolagus cuniculus (Rabbit), this protein is Serum paraoxonase/arylesterase 1 (PON1).